We begin with the raw amino-acid sequence, 567 residues long: Proline--tRNA ligase (567 aa).

Belongs to the class-II aminoacyl-tRNA synthetase family. ProS type 1 subfamily. As to quaternary structure, homodimer.

The protein localises to the cytoplasm. The enzyme catalyses tRNA(Pro) + L-proline + ATP = L-prolyl-tRNA(Pro) + AMP + diphosphate. Catalyzes the attachment of proline to tRNA(Pro) in a two-step reaction: proline is first activated by ATP to form Pro-AMP and then transferred to the acceptor end of tRNA(Pro). As ProRS can inadvertently accommodate and process non-cognate amino acids such as alanine and cysteine, to avoid such errors it has two additional distinct editing activities against alanine. One activity is designated as 'pretransfer' editing and involves the tRNA(Pro)-independent hydrolysis of activated Ala-AMP. The other activity is designated 'posttransfer' editing and involves deacylation of mischarged Ala-tRNA(Pro). The misacylated Cys-tRNA(Pro) is not edited by ProRS. This chain is Proline--tRNA ligase, found in Staphylococcus aureus (strain USA300).